A 731-amino-acid chain; its full sequence is Replication restart protein PriA (731 aa).

Residues 1 to 98 form a 3'BD region; sequence MSVAHVALPV…HPIGDVLFHA (98 aa). Positions 115 to 177 are WH; sequence WYWFATEQGQ…RGKGLAELAC (63 aa). The tract at residues 200–375 is helicase lobe 1; sequence TEQATAVGAI…VRQGKYRQLT (176 aa). A Helicase ATP-binding domain is found at 210-376; that stretch reads HSAADRFSAW…RQGKYRQLTL (167 aa). 223–230 lines the ATP pocket; that stretch reads GITGSGKT. The ADP site is built by Gly226, Gly228, Lys229, Thr230, Glu231, and Arg263. A DEAH box motif is present at residues 319-322; it reads DEEH. Residues 326 to 340 carry the Aromatic-rich loop (ARL) motif; sequence YKQQEGWRYHARDLA. The segment at 387–430 is helicase lobe 2, N-terminus; it reads QQHVLDLKGQPLQAGLSPALISRMRQHLQADNQVILFLNRRGFA. Residues 431–485 are CRR; the sequence is PALLCHDCGWIAECPRCDSYYTLHQAQHHLRCHHCDSQRPIPRQCPSCGSTHLVP. Zn(2+) is bound by residues Cys435, Cys438, Cys444, Cys447, Cys462, Cys465, Cys475, and Cys478. The Helicase C-terminal domain maps to 470 to 637; it reads PIPRQCPSCG…QLPPWTSHVL (168 aa). The interval 486 to 626 is helicase lobe 2, C-terminus; that stretch reads VGIGTEQLEQ…AEQALAERQT (141 aa). Lys543 serves as a coordination point for ADP. Residues 633-731 are CTD; it reads TSHVLIRAED…WVLDVDPIEG (99 aa).

Belongs to the helicase family. PriA subfamily. As to quaternary structure, binds SSB. Component of the replication restart primosome. Zn(2+) serves as cofactor.

It catalyses the reaction Couples ATP hydrolysis with the unwinding of duplex DNA by translocating in the 3'-5' direction.. The enzyme catalyses ATP + H2O = ADP + phosphate + H(+). With respect to regulation, ATPase activity is stimulated by single-stranded binding protein (SSB). Its function is as follows. Initiates the restart of stalled replication forks, which reloads the replicative helicase on sites other than the origin of replication. Recognizes and binds to abandoned replication forks and remodels them to uncover a helicase loading site. Promotes assembly of the primosome at these replication forks. In terms of biological role, recognizes abandoned replication forks and remodels SSB on ssDNA to uncover a loading site for DnaB. Binds replication fork DNA, has DNA-dependent ATPase activity in the presence of replication fork DNA, restores normal cell growth and SOS induction to E.coli mutant pirA304. The chain is Replication restart protein PriA from Klebsiella pneumoniae subsp. pneumoniae (strain ATCC 700721 / MGH 78578).